The following is a 333-amino-acid chain: Meiotic recombination protein rec24 (333 aa).

It belongs to the MEI4L family. Interacts with Rec7, as part of the meiotic recombination initiation complex.

Its subcellular location is the cytoplasm. The protein localises to the nucleus. Required for correct meiotic chromosome segregation and recombination. Accessory protein required for Rec12 activity, which is involved in formation of the double-strand breaks (DSBs) that initiate meiotic recombination. This is Meiotic recombination protein rec24 (rec24) from Schizosaccharomyces pombe (strain 972 / ATCC 24843) (Fission yeast).